The primary structure comprises 313 residues: Porphobilinogen deaminase (313 aa).

Position 242 is an S-(dipyrrolylmethanemethyl)cysteine (Cys242).

Belongs to the HMBS family. Monomer. Dipyrromethane serves as cofactor.

The catalysed reaction is 4 porphobilinogen + H2O = hydroxymethylbilane + 4 NH4(+). It functions in the pathway porphyrin-containing compound metabolism; protoporphyrin-IX biosynthesis; coproporphyrinogen-III from 5-aminolevulinate: step 2/4. Functionally, tetrapolymerization of the monopyrrole PBG into the hydroxymethylbilane pre-uroporphyrinogen in several discrete steps. In Escherichia fergusonii (strain ATCC 35469 / DSM 13698 / CCUG 18766 / IAM 14443 / JCM 21226 / LMG 7866 / NBRC 102419 / NCTC 12128 / CDC 0568-73), this protein is Porphobilinogen deaminase.